A 781-amino-acid polypeptide reads, in one-letter code: Probable serine/threonine-protein kinase C70.05c (781 aa).

2 disordered regions span residues 1 to 315 and 368 to 417; these read MPSD…PLVS and YSGK…TNIS. Residues 21-31 are compositionally biased toward low complexity; the sequence is ESPSSRSIGSG. Positions 43 to 63 are enriched in polar residues; the sequence is FKNSFLSRKNSSQIKSPSDYK. A compositionally biased stretch (basic and acidic residues) spans 64–73; sequence SSAHEQRVNH. The segment covering 74-92 has biased composition (polar residues); it reads TTDSMAHVPGNNSPLQTPQ. S94 bears the Phosphoserine mark. The segment covering 112-121 has biased composition (basic residues); sequence SRHHKPHHSG. Composition is skewed to polar residues over residues 136-146, 161-195, and 206-228; these read SNANSPTSESP, KNTS…PNSR, and NSAS…SLSR. S253 is subject to Phosphoserine. Residues 272 to 304 are compositionally biased toward low complexity; sequence PLTASPTPSSPTGTPNSMSKSPSLSSLASTGAS. The span at 379–406 shows a compositional bias: polar residues; the sequence is NVGSSANTAPNSPTSANSSEGNQGNGPT. Residues 432–742 enclose the Protein kinase domain; that stretch reads AKRVVPRLSA…AQEALNLPFV (311 aa). ATP-binding positions include 452–460 and K480; that span reads MGSGATAVI. Catalysis depends on D584, which acts as the Proton acceptor.

It belongs to the protein kinase superfamily. Ser/Thr protein kinase family.

It localises to the cytoplasm. It carries out the reaction L-seryl-[protein] + ATP = O-phospho-L-seryl-[protein] + ADP + H(+). It catalyses the reaction L-threonyl-[protein] + ATP = O-phospho-L-threonyl-[protein] + ADP + H(+). The chain is Probable serine/threonine-protein kinase C70.05c from Schizosaccharomyces pombe (strain 972 / ATCC 24843) (Fission yeast).